The sequence spans 1779 residues: 6-methylsalicylic acid synthase (1779 aa).

Residues 1-11 (MSASRSSTKFS) show a composition bias toward polar residues. The segment at 1–40 (MSASRSSTKFSTPAEGSDNGKEFTTPATSTEGHEVPDRPG) is disordered. Residues 31-40 (EGHEVPDRPG) are compositionally biased toward basic and acidic residues. A Ketosynthase family 3 (KS3) domain is found at 43 to 472 (LADVAIIGMA…GTVSHAVLEA (430 aa)). Active-site for beta-ketoacyl synthase activity residues include C215, H350, and H392. A malonyl-CoA:ACP transacylase (MAT) domain region spans residues 586–883 (WIFSGHGAQW…TPTMVRRQPA (298 aa)). S672 (for acyl/malonyl transferase activity) is an active-site residue. The segment at 942 to 1218 (THDPAANNLL…SFAGLEGESF (277 aa)) is product template (PT) domain. The interval 948–1064 (NNLLGKRIAL…AAVGAANVVP (117 aa)) is N-terminal hotdog fold. The PKS/mFAS DH domain maps to 948–1219 (NNLLGKRIAL…FAGLEGESFS (272 aa)). H980 serves as the catalytic Proton acceptor; for dehydratase activity. The interval 1079-1219 (PQKLADSFSI…FAGLEGESFS (141 aa)) is C-terminal hotdog fold. The Proton donor; for dehydratase activity role is filled by D1138. Residues 1703-1777 (QHLRDVINGC…HLVKHFTKEL (75 aa)) enclose the Carrier domain. Position 1737 is an O-(pantetheine 4'-phosphoryl)serine (S1737).

It carries out the reaction 3 malonyl-CoA + acetyl-CoA + NADPH + 3 H(+) = 6-methylsalicylate + 3 CO2 + NADP(+) + 4 CoA + H2O. It participates in secondary metabolite biosynthesis; terpenoid biosynthesis. In terms of biological role, non-reducing polyketide synthase; part of the gene cluster that mediates the biosynthesis of yanuthone D, a fungal isoprenoid epoxycyclohexenone that acts as an antibiotic against fungi and bacteria. The first step of the pathway is the synthesis of 6-methylsalicylic acid (6-MSA) by the polyketide synthase yanA. 6-MSA is then converted to m-cresol by the decarboxylase yanB. The cytochrome P450 monooxygenase yanC then catalyzes the oxidation of m-cresol to toluquinol. Epoxidation of toluquinol is then performed by the short chain dehydrogenase yanD, with the help of yanE, and a further prenylation by yanG leads to 7-deacetoxyyanuthone A. The next step is the hydroxylation of C-22 of 7-deacetoxyyanuthone A by the cytochrome P450 monooxygenase yanH to yield 22-deacetylyanuthone A. O-Mevalon transferase yanI then attaches mevalon to the hydroxyl group of 22-deacetylyanuthone A to produce yanuthone E. Finally, the FAD-dependent monooxygenase yanF oxidizes the hydroxyl group at C15 of yanuthone E to form yanuthone D. Furthermore, several branching points in the pathway lead to the production of yanuthones F and G from 7-deacetoxyyanuthone A; yanuthones H and I from 22-deacetylyanuthone A; and yanuthone J from yanuthone E. The chain is 6-methylsalicylic acid synthase from Aspergillus niger (strain ATCC 1015 / CBS 113.46 / FGSC A1144 / LSHB Ac4 / NCTC 3858a / NRRL 328 / USDA 3528.7).